The sequence spans 113 residues: Iron-sulfur cluster insertion protein ErpA (113 aa).

Cysteine 41, cysteine 105, and cysteine 107 together coordinate iron-sulfur cluster.

This sequence belongs to the HesB/IscA family. Homodimer. The cofactor is iron-sulfur cluster.

In terms of biological role, required for insertion of 4Fe-4S clusters for at least IspG. The polypeptide is Iron-sulfur cluster insertion protein ErpA (Colwellia psychrerythraea (strain 34H / ATCC BAA-681) (Vibrio psychroerythus)).